The sequence spans 405 residues: Dihydrolipoyllysine-residue succinyltransferase component of 2-oxoglutarate dehydrogenase complex (405 aa).

In terms of domain architecture, Lipoyl-binding spans 3-78 (SVDILVPDLP…TSRQILGRLR (76 aa)). Lys44 bears the N6-lipoyllysine mark. A disordered region spans residues 75–111 (GRLREGNSAGKETSAKSEEKASTPAQRQQASLEEQNN). A compositionally biased stretch (polar residues) spans 97 to 111 (TPAQRQQASLEEQNN). A Peripheral subunit-binding (PSBD) domain is found at 113–150 (ALSPAIRRLLAEHNLDASAIKGTGVGGRLTREDVEKHL). The residue at position 148 (Lys148) is an N6-acetyllysine. The span at 153 to 173 (APAKESAPAAAAPAAQPALAA) shows a compositional bias: low complexity. The segment at 153–178 (APAKESAPAAAAPAAQPALAARSEKR) is disordered. Catalysis depends on residues His376 and Asp380.

Belongs to the 2-oxoacid dehydrogenase family. Forms a 24-polypeptide structural core with octahedral symmetry. Part of the 2-oxoglutarate dehydrogenase (OGDH) complex composed of E1 (2-oxoglutarate dehydrogenase), E2 (dihydrolipoamide succinyltransferase) and E3 (dihydrolipoamide dehydrogenase); the complex contains multiple copies of the three enzymatic components (E1, E2 and E3). Interacts with SucA (via N-terminus), the E1 component of OGDH complex. The cofactor is (R)-lipoate.

It catalyses the reaction N(6)-[(R)-dihydrolipoyl]-L-lysyl-[protein] + succinyl-CoA = N(6)-[(R)-S(8)-succinyldihydrolipoyl]-L-lysyl-[protein] + CoA. It participates in amino-acid degradation; L-lysine degradation via saccharopine pathway; glutaryl-CoA from L-lysine: step 6/6. In terms of biological role, E2 component of the 2-oxoglutarate dehydrogenase (OGDH) complex which catalyzes the second step in the conversion of 2-oxoglutarate to succinyl-CoA and CO(2). In Escherichia coli O157:H7, this protein is Dihydrolipoyllysine-residue succinyltransferase component of 2-oxoglutarate dehydrogenase complex (sucB).